Reading from the N-terminus, the 437-residue chain is Vitellogenin-1 (437 aa).

Residues 1–19 form the signal peptide; the sequence is MNPLKIFCFLALVIAVASA. Disordered stretches follow at residues 161–194 and 405–437; these read QQQPINGNKDYDYGSSQGNQGATSSEEDYSESWK and PKSPFGKSAPAQKQRRYHGLHQSWKSGKNQNQE. Polar residues-rich tracts occupy residues 174–184 and 427–437; these read GSSQGNQGATS and SWKSGKNQNQE.

The protein belongs to the AB hydrolase superfamily. Lipase family. In terms of tissue distribution, synthesized in the fat body and ovarian follicle cells and accumulate in the oocyte.

Its subcellular location is the secreted. In terms of biological role, vitellogenin is the major yolk protein of eggs where it is used as a food source during embryogenesis. The sequence is that of Vitellogenin-1 (VG1-GAMMA) from Ceratitis capitata (Mediterranean fruit fly).